The following is a 473-amino-acid chain: Membrane-bound acylglycerophosphatidylinositol O-acyltransferase MBOAT7 (473 aa).

Topologically, residues 1-5 are cytoplasmic; it reads MTPEE. A helical transmembrane segment spans residues 6-22; it reads WTYLMVLLISIPVGFLF. Topologically, residues 23 to 33 are lumenal; that stretch reads KKAGPGLKRWG. The helical transmembrane segment at 34 to 57 threads the bilayer; sequence AAAVGLGLTLFTCGPHSLHSLITI. The Cytoplasmic segment spans residues 58 to 73; sequence LGTWALIQAQPCSCHA. A helical membrane pass occupies residues 74–93; the sequence is LALAWTFSYLLFFRALSLLG. Residues 94 to 194 are Lumenal-facing; it reads LPTPTPFTNA…VPSLRPLLRR (101 aa). The chain crosses the membrane as a helical span at residues 195-212; the sequence is AWPAPLFGLLFLLSSHLF. Residues 213 to 231 lie on the Cytoplasmic side of the membrane; sequence PLEAVREDAFYARPLPTRL. A helical transmembrane segment spans residues 232-261; it reads FYMIPVFFAFRMRFYVAWIAAECGCIAAGF. The Lumenal portion of the chain corresponds to 262–426; sequence GAYPVAAKAR…LSMADTLRYW (165 aa). An N-linked (GlcNAc...) asparagine glycan is attached at N321. Residues 427–447 traverse the membrane as a helical segment; the sequence is ASIYFWVHFLALACLGLGLVL. The Cytoplasmic portion of the chain corresponds to 448 to 473; that stretch reads GGGSPSKRKTPSQATSSQAKEKLREE. The tract at residues 451–473 is disordered; that stretch reads SPSKRKTPSQATSSQAKEKLREE.

Belongs to the membrane-bound acyltransferase family. Interacts with SPTSSA; the interaction facilitates MBOAT7 location to mitochondria-associated membranes (MAMs).

Its subcellular location is the endoplasmic reticulum membrane. It catalyses the reaction a 1-acyl-sn-glycero-3-phospho-(1D-myo-inositol) + an acyl-CoA = a 1,2-diacyl-sn-glycero-3-phospho-(1D-myo-inositol) + CoA. It carries out the reaction 1-octadecanoyl-sn-glycero-3-phospho-(1D-myo-inositol) + (5Z,8Z,11Z,14Z)-eicosatetraenoyl-CoA = 1-octadecanoyl-2-(5Z,8Z,11Z,14Z-eicosatetraenoyl)-sn-glycero-3-phospho-(1D-myo-inositol) + CoA. The enzyme catalyses a 1-acyl-sn-glycero-3-phospho-(1D-myo-inositol) + (5Z,8Z,11Z,14Z)-eicosatetraenoyl-CoA = a 1-acyl-2-(5Z,8Z,11Z,14Z-eicosatetraenoyl)-sn-glycero-3-phospho-(1D-myo-inositol) + CoA. The catalysed reaction is (5Z,8Z,11Z,14Z)-eicosatetraenoyl-CoA + 1-hexadecanoyl-sn-glycero-3-phosphocholine = 1-hexadecanoyl-2-(5Z,8Z,11Z,14Z-eicosatetraenoyl)-sn-glycero-3-phosphocholine + CoA. It participates in lipid metabolism; phospholipid metabolism. Its function is as follows. Acyltransferase which catalyzes the transfer of an acyl group from an acyl-CoA to a lysophosphatidylinositol (1-acylglycerophosphatidylinositol or LPI) leading to the production of a phosphatidylinositol (1,2-diacyl-sn-glycero-3-phosphoinositol or PI) and participates in the reacylation step of the phospholipid remodeling pathway also known as the Lands cycle. Prefers arachidonoyl-CoA as the acyl donor, thus contributing to the regulation of free levels arachidonic acid in cell. In liver, participates in the regulation of triglyceride metabolism through the phosphatidylinositol acyl-chain remodeling regulation. This Mus musculus (Mouse) protein is Membrane-bound acylglycerophosphatidylinositol O-acyltransferase MBOAT7.